The chain runs to 427 residues: Serine--tRNA ligase (427 aa).

Position 231-233 (231-233 (TAE)) interacts with L-serine. Residues 262 to 264 (RRE) and Val278 each bind ATP. Glu285 provides a ligand contact to L-serine. Position 349 to 352 (349 to 352 (EVSS)) interacts with ATP. Ser384 provides a ligand contact to L-serine.

Belongs to the class-II aminoacyl-tRNA synthetase family. Type-1 seryl-tRNA synthetase subfamily. As to quaternary structure, homodimer. The tRNA molecule binds across the dimer.

The protein localises to the cytoplasm. It catalyses the reaction tRNA(Ser) + L-serine + ATP = L-seryl-tRNA(Ser) + AMP + diphosphate + H(+). It carries out the reaction tRNA(Sec) + L-serine + ATP = L-seryl-tRNA(Sec) + AMP + diphosphate + H(+). It participates in aminoacyl-tRNA biosynthesis; selenocysteinyl-tRNA(Sec) biosynthesis; L-seryl-tRNA(Sec) from L-serine and tRNA(Sec): step 1/1. Its function is as follows. Catalyzes the attachment of serine to tRNA(Ser). Is also able to aminoacylate tRNA(Sec) with serine, to form the misacylated tRNA L-seryl-tRNA(Sec), which will be further converted into selenocysteinyl-tRNA(Sec). This chain is Serine--tRNA ligase, found in Chlamydia pneumoniae (Chlamydophila pneumoniae).